The following is a 162-amino-acid chain: Nitrogen regulatory protein (162 aa).

A PTS EIIA type-2 domain is found at 12-156; it reads NVLNQECTRS…EELYEIITEA (145 aa). His73 serves as the catalytic Tele-phosphohistidine intermediate.

It localises to the cytoplasm. In terms of biological role, seems to have a role in regulating nitrogen assimilation. The sequence is that of Nitrogen regulatory protein (ptsN) from Klebsiella oxytoca.